A 371-amino-acid chain; its full sequence is Cytochrome b (371 aa).

The next 8 helical transmembrane spans lie at 25–45, 69–90, 105–125, 170–190, 218–238, 280–300, 312–332, and 339–358; these read FGSM…FLAV, WMMQ…YIHI, WLSG…GXXX, XXXX…XXXX, YKDL…VSFL, LGGA…PFTH, IMQL…WAAT, and FTMI…IMNP. Heme b-binding residues include His-75 and His-89. 2 residues coordinate heme b: Xaa-174 and Xaa-188.

It belongs to the cytochrome b family. The cytochrome bc1 complex contains 3 respiratory subunits (MT-CYB, CYC1 and UQCRFS1), 2 core proteins (UQCRC1 and UQCRC2) and probably 6 low-molecular weight proteins. Requires heme b as cofactor.

Its subcellular location is the mitochondrion inner membrane. Component of the ubiquinol-cytochrome c reductase complex (complex III or cytochrome b-c1 complex) that is part of the mitochondrial respiratory chain. The b-c1 complex mediates electron transfer from ubiquinol to cytochrome c. Contributes to the generation of a proton gradient across the mitochondrial membrane that is then used for ATP synthesis. In Eryx tataricus (Tartar sand boa), this protein is Cytochrome b (MT-CYB).